A 372-amino-acid chain; its full sequence is MRDKVTGARRWVVKIGSALLTADGRGLDRAAMAVWVKQMVALREQGVELVLVSSGAVAAGMSRLGWTSRPSAMHELQAAAAIGQMALVQAWESSFAEHGRRTAQILLTHDDLSDRKRYLNARSTLRTLVGLDVIPVINENDTVVTDEIRFGDNDTLAALVANLVEADLLVILTDRDGMYTADPRHNPDAELIHEARADDPALDAVAGGVGGALGRGGMQTKLRASRLAARSGAHTVIVGGAIEQVLARLKAGERLGTLLAPERGLLAARKQWLAGHLQTRGTLVLDAGAVKALSQDRKSLLPVGVKAVQGSFRRGEMVVCVAPDGREVARGLVNYSALEAQKIIGQPSDAIEKLLGYVDEPELVHRDNLILV.

Position 14 (Lys-14) interacts with ATP. Substrate contacts are provided by Ser-54, Asp-141, and Asn-153. ATP is bound at residue 173–174 (TD). Residues 280–358 (RGTLVLDAGA…DAIEKLLGYV (79 aa)) enclose the PUA domain.

This sequence belongs to the glutamate 5-kinase family.

The protein resides in the cytoplasm. The enzyme catalyses L-glutamate + ATP = L-glutamyl 5-phosphate + ADP. Its pathway is amino-acid biosynthesis; L-proline biosynthesis; L-glutamate 5-semialdehyde from L-glutamate: step 1/2. Catalyzes the transfer of a phosphate group to glutamate to form L-glutamate 5-phosphate. This is Glutamate 5-kinase from Ectopseudomonas mendocina (strain ymp) (Pseudomonas mendocina).